The primary structure comprises 157 residues: 2-C-methyl-D-erythritol 2,4-cyclodiphosphate synthase (157 aa).

Residues Asp-9 and His-11 each coordinate a divalent metal cation. Residues 9–11 (DVH) and 35–36 (HS) each bind 4-CDP-2-C-methyl-D-erythritol 2-phosphate. His-43 lines the a divalent metal cation pocket. Residues 57–59 (DIG), 62–66 (FPDTD), 101–107 (AQKPKMA), 133–136 (TTTE), Phe-140, and Arg-143 contribute to the 4-CDP-2-C-methyl-D-erythritol 2-phosphate site.

It belongs to the IspF family. Homotrimer. Requires a divalent metal cation as cofactor.

The enzyme catalyses 4-CDP-2-C-methyl-D-erythritol 2-phosphate = 2-C-methyl-D-erythritol 2,4-cyclic diphosphate + CMP. Its pathway is isoprenoid biosynthesis; isopentenyl diphosphate biosynthesis via DXP pathway; isopentenyl diphosphate from 1-deoxy-D-xylulose 5-phosphate: step 4/6. Functionally, involved in the biosynthesis of isopentenyl diphosphate (IPP) and dimethylallyl diphosphate (DMAPP), two major building blocks of isoprenoid compounds. Catalyzes the conversion of 4-diphosphocytidyl-2-C-methyl-D-erythritol 2-phosphate (CDP-ME2P) to 2-C-methyl-D-erythritol 2,4-cyclodiphosphate (ME-CPP) with a corresponding release of cytidine 5-monophosphate (CMP). The polypeptide is 2-C-methyl-D-erythritol 2,4-cyclodiphosphate synthase (Halalkalibacterium halodurans (strain ATCC BAA-125 / DSM 18197 / FERM 7344 / JCM 9153 / C-125) (Bacillus halodurans)).